Here is a 102-residue protein sequence, read N- to C-terminus: Co-chaperonin GroES (102 aa).

It belongs to the GroES chaperonin family. In terms of assembly, heptamer of 7 subunits arranged in a ring. Interacts with the chaperonin GroEL.

It localises to the cytoplasm. Functionally, together with the chaperonin GroEL, plays an essential role in assisting protein folding. The GroEL-GroES system forms a nano-cage that allows encapsulation of the non-native substrate proteins and provides a physical environment optimized to promote and accelerate protein folding. GroES binds to the apical surface of the GroEL ring, thereby capping the opening of the GroEL channel. This Streptomyces coelicolor (strain ATCC BAA-471 / A3(2) / M145) protein is Co-chaperonin GroES.